The primary structure comprises 314 residues: MHPAGLAAAAAGTPRLRKWPSKRRIPVSQPGMADPHQLFDDTSSAQSRGYGAQRAPGGLSYPAASPTPHAAFLADPVSNMAMAYGSSLAAQGKELVDKNIDRFIPITKLKYYFAVDTMYVGRKLGLLFFPYLHQDWEVQYQQDTPVAPRFDVNAPDLYIPAMAFITYVLVAGLALGTQDRFSPDLLGLQASSALAWLTLEVLAILLSLYLVTVNTDLTTIDLVAFLGYKYVGMIGGVLMGLLFGKIGYYLVLGWCCVAIFVFMIRTLRLKILADAAAEGVPVRGARNQLRMYLTMAVAAAQPMLMYWLTFHLVR.

Met1 carries the N-acetylmethionine modification. The segment covering 1–12 has biased composition (low complexity); sequence MHPAGLAAAAAG. Positions 1 to 55 are disordered; it reads MHPAGLAAAAAGTPRLRKWPSKRRIPVSQPGMADPHQLFDDTSSAQSRGYGAQRA. Topologically, residues 1–156 are cytoplasmic; it reads MHPAGLAAAA…APRFDVNAPD (156 aa). Thr13 bears the Phosphothreonine mark. A compositionally biased stretch (basic residues) spans 15–25; it reads RLRKWPSKRRI. A Phosphoserine modification is found at Ser65. A helical membrane pass occupies residues 157–177; that stretch reads LYIPAMAFITYVLVAGLALGT. Residues 178–192 are Extracellular-facing; that stretch reads QDRFSPDLLGLQASS. A helical transmembrane segment spans residues 193–213; the sequence is ALAWLTLEVLAILLSLYLVTV. At 214–219 the chain is on the cytoplasmic side; it reads NTDLTT. A helical transmembrane segment spans residues 220-240; it reads IDLVAFLGYKYVGMIGGVLMG. Leu241 is a topological domain (extracellular). A helical transmembrane segment spans residues 242 to 262; that stretch reads LFGKIGYYLVLGWCCVAIFVF. Over 263 to 292 the chain is Cytoplasmic; that stretch reads MIRTLRLKILADAAAEGVPVRGARNQLRMY. The helical transmembrane segment at 293–313 threads the bilayer; it reads LTMAVAAAQPMLMYWLTFHLV. Arg314 is a topological domain (extracellular).

This sequence belongs to the YIF1 family. As to quaternary structure, interacts with HTR1A (via C-terminus). Interacts with ABCB9 (via TMD0); this interaction allows (but is not essential) the ER-to-Golgi trafficking and strongly depends on a salt bridge within TMD0.

The protein localises to the endoplasmic reticulum membrane. Its subcellular location is the golgi apparatus membrane. It is found in the endoplasmic reticulum-Golgi intermediate compartment membrane. Functionally, functions in endoplasmic reticulum to Golgi vesicle-mediated transport and regulates the proper organization of the endoplasmic reticulum and the Golgi. Plays a key role in targeting to neuronal dendrites receptors such as HTR1A. Plays also a role in primary cilium and sperm flagellum assembly probably through protein transport to these compartments. The chain is Protein YIF1B from Homo sapiens (Human).